Consider the following 296-residue polypeptide: Putative peptide transport system permease protein BRA1093/BS1330_II1085 (296 aa).

6 helical membrane-spanning segments follow: residues isoleucine 35–asparagine 55, leucine 97–alanine 117, valine 131–leucine 151, isoleucine 205–isoleucine 225, alanine 229–valine 249, and tryptophan 260–isoleucine 280. The ABC transmembrane type-1 domain occupies leucine 97–glycine 281.

The protein belongs to the binding-protein-dependent transport system permease family. As to quaternary structure, the complex is composed of two ATP-binding proteins (BRA1094), two transmembrane proteins (BRA1092 and BRA1093) and a solute-binding protein (BRA1090).

The protein resides in the cell inner membrane. Probably part of an ABC transporter complex that could be involved in peptide import. Probably responsible for the translocation of the substrate across the membrane. The protein is Putative peptide transport system permease protein BRA1093/BS1330_II1085 of Brucella suis biovar 1 (strain 1330).